The following is a 300-amino-acid chain: 4-hydroxy-tetrahydrodipicolinate synthase (300 aa).

T55 provides a ligand contact to pyruvate. The Proton donor/acceptor role is filled by Y143. The Schiff-base intermediate with substrate role is filled by K171. Residue I211 participates in pyruvate binding.

This sequence belongs to the DapA family. In terms of assembly, homotetramer; dimer of dimers.

It is found in the cytoplasm. It catalyses the reaction L-aspartate 4-semialdehyde + pyruvate = (2S,4S)-4-hydroxy-2,3,4,5-tetrahydrodipicolinate + H2O + H(+). It functions in the pathway amino-acid biosynthesis; L-lysine biosynthesis via DAP pathway; (S)-tetrahydrodipicolinate from L-aspartate: step 3/4. Its function is as follows. Catalyzes the condensation of (S)-aspartate-beta-semialdehyde [(S)-ASA] and pyruvate to 4-hydroxy-tetrahydrodipicolinate (HTPA). The chain is 4-hydroxy-tetrahydrodipicolinate synthase from Mycobacterium leprae (strain Br4923).